A 183-amino-acid polypeptide reads, in one-letter code: Adenine phosphoribosyltransferase (183 aa).

Belongs to the purine/pyrimidine phosphoribosyltransferase family. As to quaternary structure, homodimer.

Its subcellular location is the cytoplasm. The catalysed reaction is AMP + diphosphate = 5-phospho-alpha-D-ribose 1-diphosphate + adenine. Its pathway is purine metabolism; AMP biosynthesis via salvage pathway; AMP from adenine: step 1/1. Functionally, catalyzes a salvage reaction resulting in the formation of AMP, that is energically less costly than de novo synthesis. This is Adenine phosphoribosyltransferase from Escherichia fergusonii (strain ATCC 35469 / DSM 13698 / CCUG 18766 / IAM 14443 / JCM 21226 / LMG 7866 / NBRC 102419 / NCTC 12128 / CDC 0568-73).